Here is a 328-residue protein sequence, read N- to C-terminus: uncharacterized protein (328 aa).

The G-patch domain occupies 10–55 (KMGFGHAMLLKMGWKGKGLGVEEDGRTEIIVNKKKQDKVGVGASIS). The disordered stretch occupies residues 97–291 (EKITFKRTIK…KKSFSVSKTR (195 aa)). The segment covering 101–110 (FKRTIKKNSK) has biased composition (basic residues). The span at 116–126 (SDSDSDSDSES) shows a compositional bias: acidic residues. Low complexity-rich tracts occupy residues 141–158 (DSDSSCSDSSSSSSSSSS) and 210–240 (SSSSSDDSCSSESDSSSSSSSSSSSSDSSSE). Basic residues predominate over residues 248-257 (KNKNKNKNKK).

This is an uncharacterized protein from Dictyostelium discoideum (Social amoeba).